The chain runs to 254 residues: Imidazole glycerol phosphate synthase subunit HisF (254 aa).

Catalysis depends on residues D11 and D130.

This sequence belongs to the HisA/HisF family. In terms of assembly, heterodimer of HisH and HisF.

The protein resides in the cytoplasm. The catalysed reaction is 5-[(5-phospho-1-deoxy-D-ribulos-1-ylimino)methylamino]-1-(5-phospho-beta-D-ribosyl)imidazole-4-carboxamide + L-glutamine = D-erythro-1-(imidazol-4-yl)glycerol 3-phosphate + 5-amino-1-(5-phospho-beta-D-ribosyl)imidazole-4-carboxamide + L-glutamate + H(+). It participates in amino-acid biosynthesis; L-histidine biosynthesis; L-histidine from 5-phospho-alpha-D-ribose 1-diphosphate: step 5/9. Functionally, IGPS catalyzes the conversion of PRFAR and glutamine to IGP, AICAR and glutamate. The HisF subunit catalyzes the cyclization activity that produces IGP and AICAR from PRFAR using the ammonia provided by the HisH subunit. The chain is Imidazole glycerol phosphate synthase subunit HisF from Halorhodospira halophila (strain DSM 244 / SL1) (Ectothiorhodospira halophila (strain DSM 244 / SL1)).